A 315-amino-acid chain; its full sequence is Protein translocase subunit SecF (315 aa).

6 consecutive transmembrane segments (helical) span residues 12–32 (AWIV…ISWA), 136–156 (ALFR…IIYL), 166–186 (VFAI…FAIF), 188–208 (LVGG…IIGF), 247–267 (SINT…FGGD), and 271–291 (FFAL…IFMA).

This sequence belongs to the SecD/SecF family. SecF subfamily. Forms a complex with SecD. Part of the essential Sec protein translocation apparatus which comprises SecA, SecYEG and auxiliary proteins SecDF. Other proteins may also be involved.

It is found in the cell inner membrane. Part of the Sec protein translocase complex. Interacts with the SecYEG preprotein conducting channel. SecDF uses the proton motive force (PMF) to complete protein translocation after the ATP-dependent function of SecA. Functionally, probably participates in protein translocation into and across both the cytoplasmic and thylakoid membranes in cyanobacterial cells. In Synechocystis sp. (strain ATCC 27184 / PCC 6803 / Kazusa), this protein is Protein translocase subunit SecF.